The following is a 532-amino-acid chain: MIQAQESITLEDVAVDFTWEEWQLLGAAQKDLYRDVMLENYSNLVAVGYQASKPDALFKLEQGEQLWTIEDGIHSGACSDIWKVDHVLERLQSESLVNRRKPCHEHDAFENIVHCSKSQFLLGQNHDIFDLRGKSLKSNLTLVNQSKGYEIKNSVEFTGNGDSFLHANHERLHTAIKFPASQKLISTKSQFISPKHQKTRKLEKHHVCSECGKAFIKKSWLTDHQVMHTGEKPHRCSLCEKAFSRKFMLTEHQRTHTGEKPYECPECGKAFLKKSRLNIHQKTHTGEKPYICSECGKGFIQKGNLIVHQRIHTGEKPYICNECGKGFIQKTCLIAHQRFHTGKTPFVCSECGKSCSQKSGLIKHQRIHTGEKPFECSECGKAFSTKQKLIVHQRTHTGERPYGCNECGKAFAYMSCLVKHKRIHTREKQEAAKVENPPAERHSSLHTSDVMQEKNSANGATTQVPSVAPQTSLNISGLLANRNVVLVGQPVVRCAASGDNRGFAQDRNLVNAVNVVVPSVINYVLFYVTENP.

Positions 8–79 (ITLEDVAVDF…EDGIHSGACS (72 aa)) constitute a KRAB domain. 8 consecutive C2H2-type zinc fingers follow at residues 206 to 228 (HVCS…QVMH), 234 to 256 (HRCS…QRTH), 262 to 284 (YECP…QKTH), 290 to 312 (YICS…QRIH), 318 to 340 (YICN…QRFH), 346 to 368 (FVCS…QRIH), 374 to 396 (FECS…QRTH), and 402 to 424 (YGCN…KRIH). The segment covering 427-443 (EKQEAAKVENPPAERHS) has biased composition (basic and acidic residues). The interval 427-465 (EKQEAAKVENPPAERHSSLHTSDVMQEKNSANGATTQVP) is disordered. The segment covering 445 to 465 (LHTSDVMQEKNSANGATTQVP) has biased composition (polar residues).

It belongs to the krueppel C2H2-type zinc-finger protein family. Interacts with BRCA1. Interacts with RNF11. As to expression, widely expressed.

The protein localises to the nucleus. Its subcellular location is the nucleus matrix. Transcriptional repressor. Binds to a specific sequence, 5'-GGGxxxCAGxxxTTT-3', within GADD45 intron 3. In Homo sapiens (Human), this protein is Zinc finger protein 350 (ZNF350).